A 192-amino-acid polypeptide reads, in one-letter code: A-type ATP synthase subunit E (192 aa).

The protein belongs to the V-ATPase E subunit family. In terms of assembly, has multiple subunits with at least A(3), B(3), C, D, E, F, H, I and proteolipid K(x).

The protein localises to the cell membrane. In terms of biological role, component of the A-type ATP synthase that produces ATP from ADP in the presence of a proton gradient across the membrane. In Sulfolobus acidocaldarius (strain ATCC 33909 / DSM 639 / JCM 8929 / NBRC 15157 / NCIMB 11770), this protein is A-type ATP synthase subunit E.